Here is an 88-residue protein sequence, read N- to C-terminus: Acyl-CoA-binding domain-containing protein 7 (88 aa).

The ACB domain maps to 3-88; sequence LQADFDQAAQ…ARELIEKYGI (86 aa). An acyl-CoA contacts are provided by residues Arg15, 30 to 34, Lys56, and Tyr75; that span reads YGLYK.

It belongs to the ACBD7 family.

In terms of biological role, binds medium- and long-chain acyl-CoA esters. The chain is Acyl-CoA-binding domain-containing protein 7 (Acbd7) from Mus musculus (Mouse).